A 194-amino-acid chain; its full sequence is Ras-like protein RAS1 (194 aa).

16 to 23 contacts GTP; it reads GAGGVGKS. The short motif at 38–46 is the Effector region element; sequence YDPTIEDSY. GTP-binding positions include 63 to 67 and 122 to 125; these read DTAGQ and NKVD. Cys191 carries the cysteine methyl ester modification. A lipid anchor (S-geranylgeranyl cysteine) is attached at Cys191. A propeptide spans 192 to 194 (removed in mature form); sequence TLL.

It belongs to the small GTPase superfamily. Ras family.

It is found in the cell membrane. The enzyme catalyses GTP + H2O = GDP + phosphate + H(+). Alternates between an inactive form bound to GDP and an active form bound to GTP. Activated by a guanine nucleotide-exchange factor (GEF) and inactivated by a GTPase-activating protein (GAP). Ras proteins bind GDP/GTP and possess intrinsic GTPase activity. This is Ras-like protein RAS1 (RAS1) from Hydra vulgaris (Hydra).